Consider the following 176-residue polypeptide: Ferritin, higher subunit (176 aa).

Residues 7 to 156 enclose the Ferritin-like diiron domain; sequence QNFHRDCEAA…DYITNLKRLG (150 aa). Fe cation is bound by residues E24, E58, E59, H62, E104, and Q138.

Belongs to the ferritin family. Oligomer of 24 subunits. The functional molecule is roughly spherical and contains a central cavity into which the polymeric mineral iron core is deposited.

It catalyses the reaction 4 Fe(2+) + O2 + 4 H(+) = 4 Fe(3+) + 2 H2O. Its function is as follows. Stores iron in a soluble, non-toxic, readily available form. Important for iron homeostasis. Has ferroxidase activity. Iron is taken up in the ferrous form and deposited as ferric hydroxides after oxidation. In Aquarana catesbeiana (American bullfrog), this protein is Ferritin, higher subunit.